A 256-amino-acid chain; its full sequence is Rano class II histocompatibility antigen, B alpha chain (256 aa).

The signal sequence occupies residues 1 to 23; sequence MPLSRALILGVLALTTMLSPCGG. The interval 24–111 is alpha-1; that stretch reads QDDIEADHVG…KRSNSTPAVN (88 aa). At 24–218 the chain is on the extracellular side; it reads QDDIEADHVG…IPAPMSELTE (195 aa). The region spanning 108–206 is the Ig-like C1-type domain; it reads PAVNEVPEAT…LDEPVLRHWE (99 aa). The segment at 112–205 is alpha-2; it reads EVPEATVFSK…SLDEPVLRHW (94 aa). A disulfide bridge links Cys-134 with Cys-190. The N-linked (GlcNAc...) asparagine glycan is linked to Asn-145. Positions 206-218 are connecting peptide; sequence EPEIPAPMSELTE. A helical transmembrane segment spans residues 219–244; sequence TVVCALGLSVGLVGIVVGTIFIIQGL. Topologically, residues 245–256 are cytoplasmic; the sequence is RSVAPSRHPGPL.

The protein belongs to the MHC class II family.

It is found in the membrane. The protein is Rano class II histocompatibility antigen, B alpha chain (RT1-Ba) of Rattus norvegicus (Rat).